We begin with the raw amino-acid sequence, 154 residues long: Ribosomal RNA large subunit methyltransferase H (154 aa).

S-adenosyl-L-methionine is bound at residue glycine 102.

The protein belongs to the RNA methyltransferase RlmH family. As to quaternary structure, homodimer.

It localises to the cytoplasm. It catalyses the reaction pseudouridine(1915) in 23S rRNA + S-adenosyl-L-methionine = N(3)-methylpseudouridine(1915) in 23S rRNA + S-adenosyl-L-homocysteine + H(+). Specifically methylates the pseudouridine at position 1915 (m3Psi1915) in 23S rRNA. The polypeptide is Ribosomal RNA large subunit methyltransferase H (Caulobacter sp. (strain K31)).